Reading from the N-terminus, the 266-residue chain is CD82 antigen (266 aa).

Topologically, residues 1 to 11 are cytoplasmic; sequence MGAGCVKVTKY. The S-palmitoyl cysteine moiety is linked to residue Cys5. A helical transmembrane segment spans residues 12 to 32; it reads FLFLFNLLFFILGAVILGFGV. Residues 33-53 lie on the Extracellular side of the membrane; it reads WILADKNSFISVLQTSSSSLQ. A helical membrane pass occupies residues 54 to 72; sequence VGAYVFIGVGAITIVMGFL. The Cytoplasmic portion of the chain corresponds to 73 to 83; the sequence is GCIGAVNEVRC. Residue Cys74 is the site of S-palmitoyl cysteine attachment. The chain crosses the membrane as a helical span at residues 84–110; that stretch reads LLGLYFVFLLLILIAQVTVGVLFYFNA. Residues 111–227 lie on the Extracellular side of the membrane; it reads DKLKKEMGNT…KAQAWLQENF (117 aa). N-linked (GlcNAc...) asparagine glycosylation is found at Asn127, Asn131, Asn157, and Asn197. Residues 228 to 249 traverse the membrane as a helical segment; the sequence is GILLGVCAGVAVIELLGLFLSI. Topologically, residues 250 to 266 are cytoplasmic; that stretch reads CLCRYIHSEDYSKVPKY.

This sequence belongs to the tetraspanin (TM4SF) family. As to quaternary structure, forms homooligomers. Interacts directly with IGSF8. Interacts with EGFR. Interacts with VEGFA and PDGFA. Interacts with ITGA4. Interacts with ITGA6; this interaction reduces ITGA6 cell surface expression. Interacts with ITGB1. Interacts with TLR4; this interaction inhibits TLR4-mediated signaling pathway. Interacts with TLR9. Interacts with PLAUR. In terms of processing, palmitoylated. Palmitoylation contributes to oligomerization and surface expression. As to expression, highest expression in the spleen and the kidney. Low expression in skeletal muscle and in the heart.

It localises to the cell membrane. It is found in the cytoplasmic vesicle. The protein resides in the phagosome. Its function is as follows. Structural component of specialized membrane microdomains known as tetraspanin-enriched microdomains (TERMs), which act as platforms for receptor clustering and signaling. Participates thereby in diverse biological functions such as cell signal transduction, adhesion, migration and protein trafficking. Acts as a attenuator of EGF signaling, facilitating ligand-induced endocytosis of the receptor and its subsequent desensitization. Mechanistically, modulates ligand-induced ubiquitination and trafficking of EGFR via E3 ligase CBL phosphorylation by PKC. Increases cell-matrix adhesion by regulating the membrane organization of integrin alpha4/ITA4. Modulates adhesion and suppresses cell migration through other integrins such as the alpha6/ITGA6 and beta1/ITGB1. Decreases cell-associated plasminogen activation by interfering with the interaction between urokinase-type plasminogen activator/PLAU and its receptor PLAUR. Associates with CD4 or CD8 and delivers costimulatory signals for the TCR/CD3 pathway. Plays a role in the restrains phagocyte migration but supports macrophage activation. Plays a role in TLR9 trafficking to acidified CpG-containing compartments by controlling interaction between TLR9 and VAMP3 and subsequent myddosome assembly. Inhibits LPS-induced inflammatory response by preventing binding of LPS to TLR4 on the cell surface. Plays a role in the activation of macrophages into anti-inflammatory phenotypes. Independently of Toll-like receptor (TLR) signaling, is recruited to pathogen-containing phagosomes prior to fusion with lysosomes and participates in antigen presentation. Also acts to control angiogenesis and switch angiogenic milieu to quiescent state by binding and sequestering VEGFA and PDGFA to inhibit the signaling they trigger via their respective cell surface receptor. In Mus musculus (Mouse), this protein is CD82 antigen (Cd82).